We begin with the raw amino-acid sequence, 230 residues long: 6-carboxyhexanoate--CoA ligase (230 aa).

Belongs to the BioW family. Homodimer. Requires Mg(2+) as cofactor.

The catalysed reaction is heptanedioate + ATP + CoA = 6-carboxyhexanoyl-CoA + AMP + diphosphate. It functions in the pathway metabolic intermediate metabolism; pimeloyl-CoA biosynthesis; pimeloyl-CoA from pimelate: step 1/1. Catalyzes the transformation of pimelate into pimeloyl-CoA with concomitant hydrolysis of ATP to AMP. This Staphylococcus aureus (strain MSSA476) protein is 6-carboxyhexanoate--CoA ligase.